Consider the following 280-residue polypeptide: Ribosomal RNA small subunit methyltransferase I (280 aa).

The protein belongs to the methyltransferase superfamily. RsmI family.

It localises to the cytoplasm. The catalysed reaction is cytidine(1402) in 16S rRNA + S-adenosyl-L-methionine = 2'-O-methylcytidine(1402) in 16S rRNA + S-adenosyl-L-homocysteine + H(+). Catalyzes the 2'-O-methylation of the ribose of cytidine 1402 (C1402) in 16S rRNA. In Rickettsia prowazekii (strain Madrid E), this protein is Ribosomal RNA small subunit methyltransferase I.